Reading from the N-terminus, the 402-residue chain is Oxysterol-binding protein 8 (402 aa).

Residues 328 to 361 (DRIALEEGNLDVAAKEKHNLEEKQREDKRQRVAE) adopt a coiled-coil conformation.

Belongs to the OSBP family.

In Dictyostelium discoideum (Social amoeba), this protein is Oxysterol-binding protein 8 (osbH).